Reading from the N-terminus, the 483-residue chain is Glutamate--tRNA ligase (483 aa).

A 'HIGH' region motif is present at residues 9-19 (PSPTGFLHIGN). The 'KMSKS' region signature appears at 253 to 257 (KLSKR). K256 contributes to the ATP binding site.

Belongs to the class-I aminoacyl-tRNA synthetase family. Glutamate--tRNA ligase type 1 subfamily. Monomer.

It is found in the cytoplasm. It carries out the reaction tRNA(Glu) + L-glutamate + ATP = L-glutamyl-tRNA(Glu) + AMP + diphosphate. In terms of biological role, catalyzes the attachment of glutamate to tRNA(Glu) in a two-step reaction: glutamate is first activated by ATP to form Glu-AMP and then transferred to the acceptor end of tRNA(Glu). This chain is Glutamate--tRNA ligase, found in Mycoplasma mycoides subsp. mycoides SC (strain CCUG 32753 / NCTC 10114 / PG1).